The sequence spans 317 residues: Pinoresinol reductase 1 (317 aa).

Positions 18, 20, 21, 41, 50, 90, 91, 95, 98, 121, and 122 each coordinate NADP(+). M125 provides a ligand contact to (-)-pinoresinol. 2 residues coordinate NADP(+): K144 and F166. K144 acts as the Proton acceptor in catalysis. The (-)-pinoresinol site is built by M177 and V178.

The protein belongs to the NmrA-type oxidoreductase family. Isoflavone reductase subfamily. Forms homodimers. In terms of tissue distribution, expressed in roots and stems.

The catalysed reaction is (-)-lariciresinol + NADP(+) = (-)-pinoresinol + NADPH + H(+). The enzyme catalyses (+)-lariciresinol + NADP(+) = (+)-pinoresinol + NADPH + H(+). Reductase involved in lignan biosynthesis. Involved in secondary cell wall biosynthesis in fiber cells. Unlike conventional pinoresinol reductases that can reduce both pinoresinol and lariciresinol, PRR1 shows a strict substrate preference toward pinoresinol. Active on both (+) and (-)-pinoresinol. Abstracts the 4R-hydride from the NADPH cofactor during catalysis. This Arabidopsis thaliana (Mouse-ear cress) protein is Pinoresinol reductase 1.